Here is a 404-residue protein sequence, read N- to C-terminus: Phospho-N-acetylmuramoyl-pentapeptide-transferase (404 aa).

The next 10 membrane-spanning stretches (helical) occupy residues 30–50, 73–93, 100–120, 132–152, 209–229, 242–262, 274–294, 301–321, 326–346, and 381–401; these read SAAI…IIFF, IPTM…LLFA, IMLL…DDYI, GKFK…TLIF, YMWI…SNGA, TSAI…NVIF, LAEL…FLWY, IFMG…LAIV, LMIP…IIQV, and KIVT…LVTL.

The protein belongs to the glycosyltransferase 4 family. MraY subfamily. Mg(2+) is required as a cofactor.

It is found in the cell inner membrane. The catalysed reaction is UDP-N-acetyl-alpha-D-muramoyl-L-alanyl-gamma-D-glutamyl-meso-2,6-diaminopimeloyl-D-alanyl-D-alanine + di-trans,octa-cis-undecaprenyl phosphate = di-trans,octa-cis-undecaprenyl diphospho-N-acetyl-alpha-D-muramoyl-L-alanyl-D-glutamyl-meso-2,6-diaminopimeloyl-D-alanyl-D-alanine + UMP. It participates in cell wall biogenesis; peptidoglycan biosynthesis. Catalyzes the initial step of the lipid cycle reactions in the biosynthesis of the cell wall peptidoglycan: transfers peptidoglycan precursor phospho-MurNAc-pentapeptide from UDP-MurNAc-pentapeptide onto the lipid carrier undecaprenyl phosphate, yielding undecaprenyl-pyrophosphoryl-MurNAc-pentapeptide, known as lipid I. The chain is Phospho-N-acetylmuramoyl-pentapeptide-transferase from Amoebophilus asiaticus (strain 5a2).